Consider the following 322-residue polypeptide: Protein farnesyltransferase/geranylgeranyltransferase type-1 subunit alpha (322 aa).

The disordered stretch occupies residues 1 to 27 (MSSSEEDDGYVPFSKRPEWSDVKPLAQ). PFTA repeat units lie at residues 62–95 (RVLDLLEEVIQENPSNYTIWYYRREVLKAIEQDE), 103–136 (QEMNLLNDMGETDPKNYQIWNHRRFIVEKYIGSD), 138–171 (KEKEFLSGVLLEDAKNYHAWSHRQWLLKTYRDWN), 173–205 (ELAMVDKLLSLDHRNNSVWNHRFFVISNLNPSP), 213–246 (REVEFAFNHIRHSPNNESPWSYLKGLFKGQKIST), and 287–321 (NSLNICKLLSETIDPIHKNYWNFKYNTISDQLKLI).

The protein belongs to the protein prenyltransferase subunit alpha family. Heterodimer of fntA and fntB (farnesyltransferase). Heterodimer of an alpha and a beta subunit. It depends on Mg(2+) as a cofactor.

The enzyme catalyses L-cysteinyl-[protein] + (2E,6E)-farnesyl diphosphate = S-(2E,6E)-farnesyl-L-cysteinyl-[protein] + diphosphate. It catalyses the reaction geranylgeranyl diphosphate + L-cysteinyl-[protein] = S-geranylgeranyl-L-cysteinyl-[protein] + diphosphate. In terms of biological role, catalyzes the transfer of a farnesyl or geranyl-geranyl moiety from farnesyl or geranyl-geranyl diphosphate to a cysteine at the fourth position from the C-terminus of several proteins having the C-terminal sequence Cys-aliphatic-aliphatic-X. The alpha subunit is thought to participate in a stable complex with the substrate. The beta subunit binds the peptide substrate. The polypeptide is Protein farnesyltransferase/geranylgeranyltransferase type-1 subunit alpha (fntA) (Dictyostelium discoideum (Social amoeba)).